Here is a 229-residue protein sequence, read N- to C-terminus: Large ribosomal subunit protein uL1 (229 aa).

The protein belongs to the universal ribosomal protein uL1 family. Part of the 50S ribosomal subunit.

Binds directly to 23S rRNA. The L1 stalk is quite mobile in the ribosome, and is involved in E site tRNA release. Its function is as follows. Protein L1 is also a translational repressor protein, it controls the translation of the L11 operon by binding to its mRNA. This chain is Large ribosomal subunit protein uL1, found in Lacticaseibacillus casei (strain BL23) (Lactobacillus casei).